A 108-amino-acid chain; its full sequence is uncharacterized protein (108 aa).

Helical transmembrane passes span 24–44 (LWIT…GGLL), 55–75 (AHMA…YLAM), and 88–108 (RFEI…SIGI).

The protein to cation A.eutrophus efflux system protein CzcD.

Its subcellular location is the cell membrane. This is an uncharacterized protein from Geobacillus stearothermophilus (Bacillus stearothermophilus).